Here is a 175-residue protein sequence, read N- to C-terminus: Isopentenyl-diphosphate Delta-isomerase (175 aa).

Residues His-23 and His-30 each contribute to the Mn(2+) site. The region spanning 28–162 is the Nudix hydrolase domain; it reads TLHLAFCVFV…PLRYTPWFRR (135 aa). Cys-65 is a catalytic residue. His-67 contacts Mn(2+). Residue Glu-85 participates in Mg(2+) binding. Mn(2+)-binding residues include Glu-111 and Glu-113. Glu-113 is an active-site residue.

Belongs to the IPP isomerase type 1 family. Mg(2+) is required as a cofactor. It depends on Mn(2+) as a cofactor.

It localises to the cytoplasm. The enzyme catalyses isopentenyl diphosphate = dimethylallyl diphosphate. It participates in isoprenoid biosynthesis; dimethylallyl diphosphate biosynthesis; dimethylallyl diphosphate from isopentenyl diphosphate: step 1/1. Its function is as follows. Catalyzes the 1,3-allylic rearrangement of the homoallylic substrate isopentenyl (IPP) to its highly electrophilic allylic isomer, dimethylallyl diphosphate (DMAPP). In Halorhodospira halophila (strain DSM 244 / SL1) (Ectothiorhodospira halophila (strain DSM 244 / SL1)), this protein is Isopentenyl-diphosphate Delta-isomerase.